A 584-amino-acid chain; its full sequence is 2-isopropylmalate synthase (584 aa).

One can recognise a Pyruvate carboxyltransferase domain in the interval 45 to 323 (PRWLSTDLRD…SPNLDFSKLD (279 aa)). A divalent metal cation contacts are provided by D54, H262, H264, and N298.

This sequence belongs to the alpha-IPM synthase/homocitrate synthase family. LeuA type 2 subfamily. In terms of assembly, homodimer. A divalent metal cation is required as a cofactor.

The catalysed reaction is 3-methyl-2-oxobutanoate + acetyl-CoA + H2O = (2S)-2-isopropylmalate + CoA + H(+). It functions in the pathway amino-acid biosynthesis; L-leucine biosynthesis; L-leucine from 3-methyl-2-oxobutanoate: step 1/4. Functionally, catalyzes the condensation of the acetyl group of acetyl-CoA with 3-methyl-2-oxobutanoate (2-oxoisovalerate) to form 3-carboxy-3-hydroxy-4-methylpentanoate (2-isopropylmalate). This Schizosaccharomyces pombe (strain 972 / ATCC 24843) (Fission yeast) protein is 2-isopropylmalate synthase (leu3).